Consider the following 201-residue polypeptide: Putative ankyrin repeat protein R868 (201 aa).

ANK repeat units lie at residues Tyr125 to Phe154 and Lys156 to Phe188.

The polypeptide is Putative ankyrin repeat protein R868 (Acanthamoeba polyphaga (Amoeba)).